The primary structure comprises 157 residues: Protein Smg homolog (157 aa).

It belongs to the Smg family.

In Photobacterium profundum (strain SS9), this protein is Protein Smg homolog.